Reading from the N-terminus, the 188-residue chain is Protease-associated domain-containing protein 1 (188 aa).

The signal sequence occupies residues M1–A21. In terms of domain architecture, PA spans I83–W163. N-linked (GlcNAc...) asparagine glycans are attached at residues N121 and N171.

Post-translationally, N-glycosylated; required for efficient secretion. In terms of tissue distribution, expressed in metabolically active tissues such as liver, muscle, adipose, and heart and different brain regions like cortex and hypothalamus, expression is acutely regulated by the nutritional state.

The protein localises to the secreted. Its function is as follows. Plays a role in the modulation of physical activity and adiposity. In Mus musculus (Mouse), this protein is Protease-associated domain-containing protein 1.